A 1233-amino-acid polypeptide reads, in one-letter code: ATP-dependent helicase/nuclease subunit A (1233 aa).

The UvrD-like helicase ATP-binding domain maps to 3–474 (TKWTEEQKQA…ILLYKNFRSR (472 aa)). Position 24–31 (24–31 (AAAGSGKT)) interacts with ATP. One can recognise a UvrD-like helicase C-terminal domain in the interval 518–809 (VTGGAVELHL…RIMSIHKSKG (292 aa)). The segment at 533 to 555 (VEEEVEEKEEEKNEEKDFEEEEE) is disordered.

The protein belongs to the helicase family. AddA subfamily. As to quaternary structure, heterodimer of AddA and AddB/RexB. Mg(2+) serves as cofactor.

The enzyme catalyses Couples ATP hydrolysis with the unwinding of duplex DNA by translocating in the 3'-5' direction.. It carries out the reaction ATP + H2O = ADP + phosphate + H(+). Its function is as follows. The heterodimer acts as both an ATP-dependent DNA helicase and an ATP-dependent, dual-direction single-stranded exonuclease. Recognizes the chi site generating a DNA molecule suitable for the initiation of homologous recombination. The AddA nuclease domain is required for chi fragment generation; this subunit has the helicase and 3' -&gt; 5' nuclease activities. This Thermoanaerobacter pseudethanolicus (strain ATCC 33223 / 39E) (Clostridium thermohydrosulfuricum) protein is ATP-dependent helicase/nuclease subunit A.